Here is a 136-residue protein sequence, read N- to C-terminus: MEPWVQLKQAGLEPSGLGPLPKALRVPPPEGNPGQALMSSGAELGGARELILWIWEELGNLRRVDVQLLGQLCDLGLEMGTFREELVTILEEEEEEEEQEEKSCVEENKGPEEKQDEERSRSSYPAQRLPDFGMTI.

The segment at E92–I136 is disordered. Basic and acidic residues predominate over residues E101–R121.

The protein is Glutamate-rich protein 4 (Erich4) of Mus musculus (Mouse).